We begin with the raw amino-acid sequence, 516 residues long: GMP synthase [glutamine-hydrolyzing] (516 aa).

In terms of domain architecture, Glutamine amidotransferase type-1 spans 10–201; sequence KIIVLDFGSQ…AFDVCGAVAN (192 aa). Cysteine 87 functions as the Nucleophile in the catalytic mechanism. Active-site residues include histidine 175 and glutamate 177. The 190-residue stretch at 202–391 folds into the GMPS ATP-PPase domain; sequence WTMADFIDMQ…LGIPHDLVWR (190 aa). Residue 229-235 coordinates ATP; it reads SGGVDSS.

Homodimer.

The catalysed reaction is XMP + L-glutamine + ATP + H2O = GMP + L-glutamate + AMP + diphosphate + 2 H(+). It functions in the pathway purine metabolism; GMP biosynthesis; GMP from XMP (L-Gln route): step 1/1. In terms of biological role, catalyzes the synthesis of GMP from XMP. The protein is GMP synthase [glutamine-hydrolyzing] of Lactobacillus acidophilus (strain ATCC 700396 / NCK56 / N2 / NCFM).